The following is a 900-amino-acid chain: Alanine--tRNA ligase (900 aa).

Zn(2+)-binding residues include histidine 604, histidine 608, cysteine 708, and histidine 712.

This sequence belongs to the class-II aminoacyl-tRNA synthetase family. It depends on Zn(2+) as a cofactor.

The protein localises to the cytoplasm. The enzyme catalyses tRNA(Ala) + L-alanine + ATP = L-alanyl-tRNA(Ala) + AMP + diphosphate. Catalyzes the attachment of alanine to tRNA(Ala) in a two-step reaction: alanine is first activated by ATP to form Ala-AMP and then transferred to the acceptor end of tRNA(Ala). Also edits incorrectly charged Ser-tRNA(Ala) and Gly-tRNA(Ala) via its editing domain. In Saccharolobus islandicus (strain Y.G.57.14 / Yellowstone #1) (Sulfolobus islandicus), this protein is Alanine--tRNA ligase.